Consider the following 1233-residue polypeptide: MNKKSHQQQVLQQQQQQQQQQFQQQHFQQQQQQQQFQQQQQQQQQLQQQQLQQQQQQQIQQQQQIQQQQQQQQQQQQQIQQQQQPQQIQQPQQQLPNFSVPIINQSIISNIKLYSTFETLLLSLSSTDTREQTKAIIYLSSLTINNKSNGIDLVYCIQKQLVVEAHNHIKVLLINLLGDISLDPFIDSFHILNKLLYLIRNEKSKKVLSSCLININKISKSLTFSKGNDVNSSSSSLINQIIEYIEPLLHSTSPLVRRETIVLLGSIVKNLDKESEEIQILLLNYLKDTDFRVREASLKSLSVIFQRGASLSVNKLYQSIILLLLDSFEQVRLECIKLIWIFGNIYPNHIVVSGGTKIRLVDDVFKKICNAVNDSSVIVRNCACKLLGCTYDVSLNYLIQTLSKEVMVWGKGKQYQIGHSSITKQRLQQKQQQQQQQQQQQQQQPPQQQPSQQPNQQPNQQQTNVSGTHIATPEGDFDVVGSDSLNILESGVIGAFIQGLEDEFYEVRSSAIDSMCELSVRNDEFAQKNIDFLVDIFNDEIESVRINSINSLRKIGNNVVIKEEQLHIILANLESSSKEERQSLHRLLTSIHLSNYSCLHATTQALLMNLSRYPYDIHSIFETLKIIGQTNPFTEFIVDDLLRIDPKFASVEPNMDDIFYVAVMVLVLNSCIKNRNILSLLPSFSFQHHLYFKDKYPKYFPQNLQKDSNIILAPTLKYSSVVNNNNNKNNNNNTTTTSIINDNGEINQFLNLTLSLLYGDNNNIINNNNTNNNNNNNNNNNNNNNNNNNNNNDENDENLNYGFQRLFLNQKKEIQLNKLFQECKRNFKRISSICLSLKPTSDFYNKYLKILTTIVSSSRRFKTITTSNQLNHLLYKLNHKFIGVDNNCKLILMEIGIYSFIIEILSTITLSTSSPPTTTTTTSSTSLFTSINSTPIELSNDQINQLTKKLNEYFKFSNDFKLEISTSIKSLLDLFNIKNNNINNNNNIINKKDKKLKENEENEENEENENNENENEKENGKNKEKEKNENDNENENENERPSKIQKTTSELIKTTTTTSTSTSTLIHYNLIEWTDNYIPPILKISNLIKKKSVDVILPIPNDKPIEFLDIFPLKLMINAKIENIRNLDSLFIQSTWQSIHTGQLNSQIHIIPKSAFTPTKPLSYNISCSIYLSLQNIRHNRLSSKESIPLRISIVEQFLNNNNNNNVTIIPLSKFVIFNILPVDNVNLLPNLI.

HEAT repeat units lie at residues 236–273 (SLIN…NLDK) and 275–310 (SEEI…RGAS). Residues 426 to 473 (RLQQKQQQQQQQQQQQQQQPPQQQPSQQPNQQPNQQQTNVSGTHIATP) form a disordered region. Low complexity predominate over residues 428-462 (QQKQQQQQQQQQQQQQQPPQQQPSQQPNQQPNQQQ). HEAT repeat units follow at residues 487–524 (ILES…RNDE), 525–561 (FAQK…NVVI), and 563–597 (EEQL…SNYS). The segment covering 767-792 (NNNTNNNNNNNNNNNNNNNNNNNNNN) has biased composition (low complexity). Disordered regions lie at residues 767–796 (NNNT…DEND) and 993–1057 (DKKL…TTTT). Residues 1000–1013 (EENEENEENENNEN) show a composition bias toward acidic residues. Positions 1014-1030 (ENEKENGKNKEKEKNEN) are enriched in basic and acidic residues. The span at 1046–1057 (KTTSELIKTTTT) shows a compositional bias: low complexity.

The protein belongs to the Integrator subunit 4 family. In terms of assembly, component of the Integrator complex. The core complex associates with protein phosphatase 2A subunits, to form the Integrator-PP2A (INTAC) complex.

It localises to the nucleus. Its subcellular location is the cytoplasm. Its function is as follows. Component of the integrator complex, a multiprotein complex that terminates RNA polymerase II (Pol II) transcription in the promoter-proximal region of genes. The integrator complex provides a quality checkpoint during transcription elongation by driving premature transcription termination of transcripts that are unfavorably configured for transcriptional elongation: the complex terminates transcription by (1) catalyzing dephosphorylation of the C-terminal domain (CTD) of Pol II subunit polr2a, (2) degrading the exiting nascent RNA transcript via endonuclease activity and (3) promoting the release of Pol II from bound DNA. The integrator complex is also involved in terminating the synthesis of non-coding Pol II transcripts, such as enhancer RNAs (eRNAs), small nuclear RNAs (snRNAs), telomerase RNAs and long non-coding RNAs (lncRNAs). This chain is Integrator complex subunit 4 homolog (ints4), found in Dictyostelium discoideum (Social amoeba).